Consider the following 144-residue polypeptide: uncharacterized protein (144 aa).

Basic residues predominate over residues 124-133; the sequence is KALNRKKSKT. The tract at residues 124–144 is disordered; it reads KALNRKKSKTKNGEKNGEGKS. The span at 134–144 shows a compositional bias: basic and acidic residues; that stretch reads KNGEKNGEGKS.

This is an uncharacterized protein from Acidianus filamentous virus 1 (isolate United States/Yellowstone) (AFV-1).